Reading from the N-terminus, the 405-residue chain is CRS2-associated factor 1, mitochondrial (405 aa).

A mitochondrion-targeting transit peptide spans Met1–Arg20. The segment at Arg32–Gly75 is disordered. 2 consecutive CRM domains span residues Ala157–Lys255 and Asp277–Asp373. Residues Ser384 to Thr405 form a disordered region.

In terms of assembly, part of large ribonucleo-protein complexes that include group IIB introns.

The protein resides in the mitochondrion. In terms of biological role, may be involved in the splicing of group IIB introns in mitochondria. This Arabidopsis thaliana (Mouse-ear cress) protein is CRS2-associated factor 1, mitochondrial.